Here is a 73-residue protein sequence, read N- to C-terminus: Neuropeptide-like protein 29 (73 aa).

A signal peptide spans 1–22 (MISTSSILVLVVLLACFMAASA). Y29, Y39, Y47, Y55, and Y63 each carry tyrosine amide. W71 is subject to Tryptophan amide.

It belongs to the YARP (YGGW-amide related peptide) family. Weakly or not expressed in absence of infection. Upon infection by D.coniospora, it is expressed in hypoderm. Also expressed in perivulval cells when D.coniospora spores adhere to this region. Expressed in hypodermis upon physical injury.

The protein resides in the secreted. Functionally, antimicrobial peptides that have antibacterial activity against the Gram-negative bacteria S.marcescens. Has antifungal activity against D.coniospora. May play a role in response to physical injury and osmotic stress. Through the neuropeptide receptor nlp-29, induces sleep upon activation of the innate immune response to molting and injury to the adult epidermis. The sequence is that of Neuropeptide-like protein 29 from Caenorhabditis elegans.